Here is a 368-residue protein sequence, read N- to C-terminus: Quinolinate synthase (368 aa).

Residues histidine 46 and serine 63 each coordinate iminosuccinate. A [4Fe-4S] cluster-binding site is contributed by cysteine 110. Iminosuccinate contacts are provided by residues 141–143 and serine 162; that span reads YVN. Cysteine 230 provides a ligand contact to [4Fe-4S] cluster. Iminosuccinate-binding positions include 256–258 and threonine 273; that span reads HPE. A [4Fe-4S] cluster-binding site is contributed by cysteine 320.

This sequence belongs to the quinolinate synthase family. Type 3 subfamily. [4Fe-4S] cluster is required as a cofactor.

The protein resides in the cytoplasm. The enzyme catalyses iminosuccinate + dihydroxyacetone phosphate = quinolinate + phosphate + 2 H2O + H(+). Its pathway is cofactor biosynthesis; NAD(+) biosynthesis; quinolinate from iminoaspartate: step 1/1. Catalyzes the condensation of iminoaspartate with dihydroxyacetone phosphate to form quinolinate. The chain is Quinolinate synthase from Bacillus thuringiensis (strain Al Hakam).